Here is a 561-residue protein sequence, read N- to C-terminus: Melanopsin-A (561 aa).

Over 1 to 34 (MRPSTDTMEADTAATHRNFITKVDVPDHAHYTVA) the chain is Extracellular. A helical membrane pass occupies residues 35–55 (FFVSVIGTLGVTGNALVQFAF). Residues 56–68 (YSNKKLRNLPNYF) are Cytoplasmic-facing. The helical transmembrane segment at 69 to 89 (IMNQAASDFLMAFTQSPFFFI) threads the bilayer. Topologically, residues 90–104 (NCLNREWIFGELGCK) are extracellular. The cysteines at positions 103 and 181 are disulfide-linked. Residues 105–125 (LYAFLGALFGITSMINLLAIS) form a helical membrane-spanning segment. Residues 126–148 (LDRYMVITRPLEAMKWNSKRRTT) are Cytoplasmic-facing. Residues 149-169 (IAILLVWLYSLAWSLAPLVGW) form a helical membrane-spanning segment. At 170-201 (SSYIPEGLRTSCTWDYVTYTASNRSYTMMLCC) the chain is on the extracellular side. The N-linked (GlcNAc...) asparagine glycan is linked to N192. Residues 202–222 (FVFFIPLAIISYCYLFMFLAI) traverse the membrane as a helical segment. Residues 223–255 (RKTSRDVERLGIQVRKSTIIRQKSIRTEWKLAK) are Cytoplasmic-facing. A helical membrane pass occupies residues 256–276 (IAFVVIVVYVLSWSPYACVTM). Topologically, residues 277–291 (ISWSGHANILSPYSK) are extracellular. The chain crosses the membrane as a helical span at residues 292 to 312 (TVPAVIAKASTIYNPFIYAII). K299 bears the N6-(retinylidene)lysine mark. Residues 313 to 561 (HQKYRKTLAD…EDSLEDNDVV (249 aa)) are Cytoplasmic-facing. Disordered stretches follow at residues 359–385 (AIRRQSTAASRHASASKTAAGASSYSS), 404–448 (ASFR…SATH), 479–503 (NGLSDAGKKTTVANGTPGNHKSKSA), and 539–561 (SFTDDGSVGTVVDEDSLEDNDVV). Residues 371-385 (ASASKTAAGASSYSS) show a composition bias toward low complexity. Over residues 550–561 (VDEDSLEDNDVV) the composition is skewed to acidic residues.

It belongs to the G-protein coupled receptor 1 family. Opsin subfamily. Expressed in retina and brain. Expressed in a subset of retinal horizontal cells as well as a small number of amacrine and retinal ganglion cells. Also expressed in a small population of neurons in the suprachiasmatic nucleus (SNC).

Its subcellular location is the cell membrane. Photoreceptor implicated in non-image-forming responses to light. The protein is Melanopsin-A (opn4a) of Gadus morhua (Atlantic cod).